The sequence spans 975 residues: E3 ubiquitin-protein ligase BRE1A (975 aa).

Residues 1-37 (MSGIGSKRAAGEPGTSVPPEKKTAVEDSGTTVETIKL) are disordered. At lysine 21 the chain carries N6-acetyllysine. Residue serine 41 is modified to Phosphoserine. Residues 43-90 (TEELDIRTLQTKNRKLAEMLDQRQAIEDELREHIEKLERRQATDDASL) are a coiled coil. The interval 125-155 (KALVVPEPEPDSDSNQERKDDRERGEGQEPA) is disordered. Residues serine 136 and serine 138 each carry the phosphoserine modification. Over residues 139–151 (NQERKDDRERGEG) the composition is skewed to basic and acidic residues. 2 coiled-coil regions span residues 168-375 (EEME…EEVV) and 429-898 (SLHK…TTKK). N6-acetyllysine occurs at positions 348 and 510. The disordered stretch occupies residues 507-622 (DLNKTRLRSG…GKHDDGRKKE (116 aa)). Serine 522 is subject to Phosphoserine. Positions 527–540 (EDPKDEPAELKQDS) are enriched in basic and acidic residues. Over residues 543 to 552 (LATQSAASKA) the composition is skewed to polar residues. The span at 558 to 622 (NEIKSKRDEE…GKHDDGRKKE (65 aa)) shows a compositional bias: basic and acidic residues. Serine 562 bears the Phosphoserine mark. The RING-type zinc finger occupies 922 to 961 (CPCCNMRKKDAVLTKCFHVFCFECVKTRYDTRQRKCPKCN).

It belongs to the BRE1 family. In terms of assembly, component of the RNF20/40 complex (also known as BRE1 complex) probably composed of 2 copies of RNF20/BRE1A and 2 copies of RNF40/BRE1B. Interacts with UBE2E1/UBCH6. Interacts with p53/TP53 and WAC. Interacts with PAF1; the interaction mediates the association of the PAF1 and RNF20/40 complexes which is a prerequsite for recruitment of UBE2A/B. Interacts with PA2G4. Interacts with FBXL19.

The protein resides in the nucleus. The catalysed reaction is S-ubiquitinyl-[E2 ubiquitin-conjugating enzyme]-L-cysteine + [acceptor protein]-L-lysine = [E2 ubiquitin-conjugating enzyme]-L-cysteine + N(6)-ubiquitinyl-[acceptor protein]-L-lysine.. It functions in the pathway protein modification; protein ubiquitination. Component of the RNF20/40 E3 ubiquitin-protein ligase complex that mediates monoubiquitination of 'Lys-120' of histone H2B (H2BK120ub1). H2BK120ub1 gives a specific tag for epigenetic transcriptional activation and is also prerequisite for histone H3 'Lys-4' and 'Lys-79' methylation (H3K4me and H3K79me, respectively). It thereby plays a central role in histone code and gene regulation. The RNF20/40 complex forms a H2B ubiquitin ligase complex in cooperation with the E2 enzyme UBE2A or UBE2B; reports about the cooperation with UBE2E1/UBCH are contradictory. Required for transcriptional activation of Hox genes. Recruited to the MDM2 promoter, probably by being recruited by p53/TP53, and thereby acts as a transcriptional coactivator. Mediates the polyubiquitination of PA2G4 leading to its proteasome-mediated degradation. This chain is E3 ubiquitin-protein ligase BRE1A (RNF20), found in Bos taurus (Bovine).